We begin with the raw amino-acid sequence, 588 residues long: Adenylate kinase 5, chloroplastic (588 aa).

The segment at 1–34 (MASLSLSSAHFSSTSSSSRSSISTSSLSPSSTSL) is disordered. A chloroplast-targeting transit peptide spans 1–73 (MASLSLSSAH…SFSTSNSQIR (73 aa)). 89–94 (ASGKGT) contacts ATP. The segment at 109–138 (STGDLLRAEVSSGTDIGKRAKEFMNSGSLV) is NMP. AMP contacts are provided by residues arginine 115, 136 to 138 (SLV), 165 to 168 (GFPR), and glutamine 172. Residues 202–235 (GRRLDPVTGKIYHIKNYPPESDEIKARLVTRPDD) form an LID region. Residue arginine 203 coordinates ATP. Positions 232 and 243 each coordinate AMP.

Belongs to the adenylate kinase family. Monomer.

It is found in the plastid. The protein localises to the chloroplast. The catalysed reaction is AMP + ATP = 2 ADP. Its function is as follows. Catalyzes the reversible transfer of the terminal phosphate group between ATP and AMP. This Arabidopsis thaliana (Mouse-ear cress) protein is Adenylate kinase 5, chloroplastic.